Here is a 354-residue protein sequence, read N- to C-terminus: Photosystem II protein D1 1 (354 aa).

3 helical membrane passes run 29–46 (YIGW…TATT), 118–133 (HFLI…EWEL), and 142–156 (WIAV…AATA). Histidine 118 provides a ligand contact to chlorophyll a. Tyrosine 126 is a binding site for pheophytin a. 2 residues coordinate [CaMn4O5] cluster: aspartate 170 and glutamate 189. A helical membrane pass occupies residues 197–218 (FHQLGVAGVFGGALFSAMHGSL). Histidine 198 lines the chlorophyll a pocket. Residues histidine 215 and 264 to 265 (SF) contribute to the a quinone site. Fe cation is bound at residue histidine 215. Histidine 272 contributes to the Fe cation binding site. A helical transmembrane segment spans residues 274-288 (FLAAWPVIGIWFTAL). Residues histidine 332, glutamate 333, aspartate 342, and alanine 344 each coordinate [CaMn4O5] cluster. A propeptide spanning residues 345–354 (AVEVAPAIRG) is cleaved from the precursor.

The protein belongs to the reaction center PufL/M/PsbA/D family. In terms of assembly, PSII is composed of 1 copy each of membrane proteins PsbA, PsbB, PsbC, PsbD, PsbE, PsbF, PsbH, PsbI, PsbJ, PsbK, PsbL, PsbM, PsbT, PsbX, PsbY, PsbZ, Psb30/Ycf12, peripheral proteins PsbO, CyanoQ (PsbQ), PsbU, PsbV and a large number of cofactors. It forms dimeric complexes. The D1/D2 heterodimer binds P680, chlorophylls that are the primary electron donor of PSII, and subsequent electron acceptors. It shares a non-heme iron and each subunit binds pheophytin, quinone, additional chlorophylls, carotenoids and lipids. D1 provides most of the ligands for the Mn4-Ca-O5 cluster of the oxygen-evolving complex (OEC). There is also a Cl(-1) ion associated with D1 and D2, which is required for oxygen evolution. The PSII complex binds additional chlorophylls, carotenoids and specific lipids. serves as cofactor. Tyr-161 forms a radical intermediate that is referred to as redox-active TyrZ, YZ or Y-Z. In terms of processing, C-terminally processed by CtpA; processing is essential to allow assembly of the oxygen-evolving complex and thus photosynthetic growth.

Its subcellular location is the cellular thylakoid membrane. It catalyses the reaction 2 a plastoquinone + 4 hnu + 2 H2O = 2 a plastoquinol + O2. In terms of biological role, photosystem II (PSII) is a light-driven water:plastoquinone oxidoreductase that uses light energy to abstract electrons from H(2)O, generating O(2) and a proton gradient subsequently used for ATP formation. It consists of a core antenna complex that captures photons, and an electron transfer chain that converts photonic excitation into a charge separation. The D1/D2 (PsbA/PsbD) reaction center heterodimer binds P680, the primary electron donor of PSII as well as several subsequent electron acceptors. The polypeptide is Photosystem II protein D1 1 (Synechococcus sp. (strain JA-3-3Ab) (Cyanobacteria bacterium Yellowstone A-Prime)).